Reading from the N-terminus, the 94-residue chain is Co-chaperonin GroES (94 aa).

The protein belongs to the GroES chaperonin family. As to quaternary structure, heptamer of 7 subunits arranged in a ring. Interacts with the chaperonin GroEL.

It is found in the cytoplasm. Functionally, together with the chaperonin GroEL, plays an essential role in assisting protein folding. The GroEL-GroES system forms a nano-cage that allows encapsulation of the non-native substrate proteins and provides a physical environment optimized to promote and accelerate protein folding. GroES binds to the apical surface of the GroEL ring, thereby capping the opening of the GroEL channel. The polypeptide is Co-chaperonin GroES (Latilactobacillus sakei subsp. sakei (strain 23K) (Lactobacillus sakei subsp. sakei)).